The following is a 337-amino-acid chain: Ketol-acid reductoisomerase (NADP(+)) (337 aa).

The 181-residue stretch at 3-183 (IELLYDADAD…GGARAGVIPT (181 aa)) folds into the KARI N-terminal Rossmann domain. Residues 26-29 (YGSQ), Arg49, Ser52, Ser54, and 84-87 (DTSQ) each bind NADP(+). His109 is a catalytic residue. Residue Gly135 participates in NADP(+) binding. The 146-residue stretch at 184–329 (TFREETETDL…SKLRDLMSWV (146 aa)) folds into the KARI C-terminal knotted domain. Residues Asp192, Glu196, Glu228, and Glu232 each coordinate Mg(2+). Residue Ser253 participates in substrate binding.

Belongs to the ketol-acid reductoisomerase family. It depends on Mg(2+) as a cofactor.

It carries out the reaction (2R)-2,3-dihydroxy-3-methylbutanoate + NADP(+) = (2S)-2-acetolactate + NADPH + H(+). The catalysed reaction is (2R,3R)-2,3-dihydroxy-3-methylpentanoate + NADP(+) = (S)-2-ethyl-2-hydroxy-3-oxobutanoate + NADPH + H(+). It participates in amino-acid biosynthesis; L-isoleucine biosynthesis; L-isoleucine from 2-oxobutanoate: step 2/4. It functions in the pathway amino-acid biosynthesis; L-valine biosynthesis; L-valine from pyruvate: step 2/4. In terms of biological role, involved in the biosynthesis of branched-chain amino acids (BCAA). Catalyzes an alkyl-migration followed by a ketol-acid reduction of (S)-2-acetolactate (S2AL) to yield (R)-2,3-dihydroxy-isovalerate. In the isomerase reaction, S2AL is rearranged via a Mg-dependent methyl migration to produce 3-hydroxy-3-methyl-2-ketobutyrate (HMKB). In the reductase reaction, this 2-ketoacid undergoes a metal-dependent reduction by NADPH to yield (R)-2,3-dihydroxy-isovalerate. The polypeptide is Ketol-acid reductoisomerase (NADP(+)) (Corynebacterium diphtheriae (strain ATCC 700971 / NCTC 13129 / Biotype gravis)).